The primary structure comprises 388 residues: Norsolorinic acid reductase A (388 aa).

An NADP(+)-binding site is contributed by Asp-69. The active-site Proton donor is the Tyr-74. His-148 serves as a coordination point for substrate. NADP(+) contacts are provided by residues Ser-178–Asp-179, Gln-204, Gly-233–Ala-243, and Arg-300–Asn-308.

It belongs to the aldo/keto reductase family. Aldo/keto reductase 2 subfamily.

Its pathway is mycotoxin biosynthesis; aflatoxin biosynthesis. Its function is as follows. Norsolorinic acid reductase; part of the gene cluster that mediates the biosynthesis of aflatoxins, a group of polyketide-derived furanocoumarins, and part of the most toxic and carcinogenic compounds among the known mycotoxins. The four major aflatoxins produced by A.parasiticus are aflatoxin B1 (AFB1), aflatoxin B2 (AFB2), aflatoxin G1 (AFG1) and aflatoxin G2 (AFG2). Within the aflatoxin pathway, the norsolorinic acid reductase aflE may play a role in the conversion of norsolorinic acid (NOR) to averantin (AVN). The biosynthesis of aflatoxins begins with the norsolorinic acid synthase aflC that combines a hexanoyl starter unit produced by the fatty acid synthase aflA/aflB and 7 malonyl-CoA extender units to synthesize the precursor NOR. The second step is the conversion of NOR to averantin and requires the norsolorinic acid ketoreductase aflD, which catalyzes the dehydration of norsolorinic acid to form (1'S)-averantin. The norsolorinic acid reductases aflE and aflF may also play a role in the conversion of NOR to AVN. The cytochrome P450 monooxygenase aflG then catalyzes the hydroxylation of AVN to 5'hydroxyaverantin (HAVN). The next step is performed by the 5'-hydroxyaverantin dehydrogenase aflH that transforms HAVN to 5'-oxoaverantin (OAVN) which is further converted to averufin (AVF) by aflK that plays a dual role in the pathway, as a 5'-oxoaverantin cyclase that mediates conversion of 5'-oxoaverantin, as well as a versicolorin B synthase in a later step in the pathway. The averufin oxidase aflI catalyzes the conversion of AVF to versiconal hemiacetal acetate (VHA). VHA is then the substrate for the versiconal hemiacetal acetate esterase aflJ to yield versiconal (VAL). Versicolorin B synthase aflK then converts VAL to versicolorin B (VERB) by closing the bisfuran ring of aflatoxin which is required for DNA-binding, thus giving to aflatoxin its activity as a mutagen. Then, the activity of the versicolorin B desaturase aflL leads to versicolorin A (VERA). A branch point starts from VERB since it can also be converted to dihydrodemethylsterigmatocystin (DMDHST), probably also by aflL, VERA being a precursor for aflatoxins B1 and G1, and DMDHST for aflatoxins B2 and G2. Next, the versicolorin reductase aflM and the cytochrome P450 monooxygenase aflN are involved in conversion of VERA to demethylsterigmatocystin (DMST). AflX and aflY seem also involved in this step, through probable aflX-mediated epoxide ring-opening step following versicolorin A oxidation and aflY-mediated Baeyer-Villiger oxidation required for the formation of the xanthone ring. The methyltransferase aflO then leads to the modification of DMST to sterigmatocystin (ST), and of DMDHST to dihydrosterigmatocystin (DHST). Both ST and DHST are then substrates of the O-methyltransferase aflP to yield O-methylsterigmatocystin (OMST) and dihydro-O-methylsterigmatocystin (DHOMST), respectively. Finally OMST is converted to aflatoxins B1 and G1, and DHOMST to aflatoxins B2 and G2, via the action of several enzymes including O-methylsterigmatocystin oxidoreductase aflQ, the cytochrome P450 monooxygenase aflU, but also the NADH-dependent flavin oxidoreductase nadA which is specifically required for the synthesis of AFG1. The sequence is that of Norsolorinic acid reductase A from Aspergillus parasiticus (strain ATCC 56775 / NRRL 5862 / SRRC 143 / SU-1).